Here is a 113-residue protein sequence, read N- to C-terminus: U11-theraphotoxin-Hhn1j (113 aa).

Positions 1–21 (MNTVRVTFLLVFVLAVSLGQA) are cleaved as a signal peptide. Residues 22–74 (DKDENRMEMQEKTEQGKSYLDFAENLLLQKLEELEAKLLEEDSEESRNSRQKR) constitute a propeptide that is removed on maturation. A compositionally biased stretch (basic and acidic residues) spans 60–69 (LEEDSEESRN). Residues 60–83 (LEEDSEESRNSRQKRCIGEGVPCD) are disordered. Cystine bridges form between C75–C90, C82–C95, and C89–C110.

This sequence belongs to the neurotoxin 14 (magi-1) family. 01 (HNTX-16) subfamily. As to expression, expressed by the venom gland.

Its subcellular location is the secreted. Its function is as follows. Probable ion channel inhibitor. The chain is U11-theraphotoxin-Hhn1j from Cyriopagopus hainanus (Chinese bird spider).